We begin with the raw amino-acid sequence, 282 residues long: E3 ubiquitin-protein ligase SIAH1B (282 aa).

Polar residues predominate over residues 1-17; it reads MSRQAATALSTGTSKCP. The disordered stretch occupies residues 1 to 23; that stretch reads MSRQAATALSTGTSKCPPSQRVP. Position 19 is a phosphoserine; by ATM and ATR (Ser-19). The RING-type zinc-finger motif lies at 41 to 76; it reads CPVCFDYVLPPILQCQSGHLVCSNCRPKLTCCPTCR. The interval 90-282 is SBD; the sequence is VANSVLFPCK…LGINVTISMC (193 aa). An SIAH-type zinc finger spans residues 93 to 153; it reads SVLFPCKYSA…VMPHLMHQHK (61 aa). Cys-98, Cys-105, His-117, Cys-121, Cys-128, Cys-135, His-147, and His-152 together coordinate Zn(2+).

Belongs to the SINA (Seven in absentia) family. Homodimer. Phosphorylated on Ser-19 by ATM and ATR. In terms of tissue distribution, widely expressed at low level in embryos and adults. Due to the high similarity between SIAH1A and SIAH1B, it is difficult to distinguish its own tissue specificity. Overexpressed in endothelial cells of adult lung.

Its subcellular location is the cytoplasm. It is found in the nucleus. The enzyme catalyses S-ubiquitinyl-[E2 ubiquitin-conjugating enzyme]-L-cysteine + [acceptor protein]-L-lysine = [E2 ubiquitin-conjugating enzyme]-L-cysteine + N(6)-ubiquitinyl-[acceptor protein]-L-lysine.. It participates in protein modification; protein ubiquitination. Its function is as follows. E3 ubiquitin-protein ligase that mediates ubiquitination and subsequent proteasomal degradation of target proteins. E3 ubiquitin ligases accept ubiquitin from an E2 ubiquitin-conjugating enzyme in the form of a thioester and then directly transfers the ubiquitin to targeted substrates. Mediates E3 ubiquitin ligase activity either through direct binding to substrates or by functioning as the essential RING domain subunit of larger E3 complexes. The polypeptide is E3 ubiquitin-protein ligase SIAH1B (Siah1b) (Mus musculus (Mouse)).